The sequence spans 326 residues: MSTEDALCFTGEEYARHVREYWRGVAESDGFDSEDIRSPVVLTGLFHYDCQSGRRYPDPLLVKRYALLGLHRFNILQGTSFELDALQKFNKTMNLTSSYYITLLANEPGAIPLQKTFQVRVDERKYDTLDLTVAIARLKKDQNEAAETTKEPFVPHFCCSAVSDGVFQGPLPDWPSDDALRHDRNRFYELEKSEWQATDWISLYLELLILATDRGMFGVAQTGLPQVQILKVVIETEEENEKPLDKRLNARRAHVYITFTGLPKSPRLVEIGEHVERKAIIRRVIDDSGYLTLLGKFWSGKDTEQRSKTRQSEEKVESSQKRSRLC.

The segment covering 301 to 320 has biased composition (basic and acidic residues); that stretch reads KDTEQRSKTRQSEEKVESSQ. Residues 301 to 326 are disordered; it reads KDTEQRSKTRQSEEKVESSQKRSRLC.

Belongs to the UPF0725 (EMB2204) family.

The chain is Putative UPF0725 protein At1g28500 from Arabidopsis thaliana (Mouse-ear cress).